Here is a 98-residue protein sequence, read N- to C-terminus: Cystatin-A (98 aa).

Position 1 is an N-acetylmethionine (Met1). Positions 46-50 (QVVAG) match the Secondary area of contact motif.

Belongs to the cystatin family.

The protein localises to the cytoplasm. Functionally, this is an intracellular thiol proteinase inhibitor. This Bos taurus (Bovine) protein is Cystatin-A (CSTA).